Reading from the N-terminus, the 81-residue chain is Short neurotoxin 1 (81 aa).

The N-terminal stretch at 1–21 is a signal peptide; the sequence is MKTLLLTLVVVTIVCLDLGYT. Disulfide bonds link C24–C43, C38–C60, C62–C73, and C74–C79.

The protein belongs to the three-finger toxin family. Short-chain subfamily. Type I alpha-neurotoxin sub-subfamily. As to expression, expressed by the venom gland.

The protein resides in the secreted. Binds to muscle nicotinic acetylcholine receptor (nAChR) and inhibit acetylcholine from binding to the receptor, thereby impairing neuromuscular transmission. The protein is Short neurotoxin 1 of Tropidechis carinatus (Australian rough-scaled snake).